Reading from the N-terminus, the 489-residue chain is Homoserine O-acetyltransferase (489 aa).

In terms of domain architecture, AB hydrolase-1 spans 47 to 354; that stretch reads NAILVCHALT…NYGHDSFLLE (308 aa). Serine 152 serves as the catalytic Nucleophile. Arginine 221 contacts substrate. Residues aspartate 315 and histidine 348 contribute to the active site. A substrate-binding site is contributed by aspartate 349. CBS domains follow at residues 375–434 and 436–489; these read MIED…NLEE and MTKN…IEEF.

Belongs to the AB hydrolase superfamily. MetX family. Homodimer.

The protein resides in the cytoplasm. It carries out the reaction L-homoserine + acetyl-CoA = O-acetyl-L-homoserine + CoA. It functions in the pathway amino-acid biosynthesis; L-methionine biosynthesis via de novo pathway; O-acetyl-L-homoserine from L-homoserine: step 1/1. In terms of biological role, transfers an acetyl group from acetyl-CoA to L-homoserine, forming acetyl-L-homoserine. The polypeptide is Homoserine O-acetyltransferase (Methanohalobium evestigatum (strain ATCC BAA-1072 / DSM 3721 / NBRC 107634 / OCM 161 / Z-7303)).